The following is a 313-amino-acid chain: Tagatose-6-phosphate kinase (313 aa).

Belongs to the carbohydrate kinase PfkB family. LacC subfamily.

It carries out the reaction D-tagatofuranose 6-phosphate + ATP = D-tagatofuranose 1,6-bisphosphate + ADP + H(+). It participates in carbohydrate metabolism; D-tagatose 6-phosphate degradation; D-glyceraldehyde 3-phosphate and glycerone phosphate from D-tagatose 6-phosphate: step 1/2. The sequence is that of Tagatose-6-phosphate kinase from Enterococcus faecalis (strain ATCC 700802 / V583).